The chain runs to 626 residues: Mitogen-activated protein kinase kinase kinase 3 (626 aa).

Residues 44–123 enclose the PB1 domain; the sequence is DVRIKFEHNG…KSLRILLLSQ (80 aa). Composition is skewed to polar residues over residues 146–155, 165–174, and 219–232; these read QSAGDINTIY, LSVSSQNPGR, and SAENSLSGSCQSLD. Disordered regions lie at residues 146–184 and 218–262; these read QSAGDINTIYQPPEPRSRHLSVSSQNPGRSSPPPGYVPE and SSAE…SDRE. The residue at position 147 (S147) is a Phosphoserine. At S166 the chain carries Phosphoserine; by SGK1. 2 positions are modified to phosphoserine: S250 and S312. S337 carries the phosphoserine; by SGK1 modification. At S340 the chain carries Phosphoserine. One can recognise a Protein kinase domain in the interval 362–622; sequence WRRGKLLGQG…AEELLTHHFA (261 aa). Residues 368–376 and K391 each bind ATP; that span reads LGQGAFGRV. The active-site Proton acceptor is the D489.

It belongs to the protein kinase superfamily. STE Ser/Thr protein kinase family. MAP kinase kinase kinase subfamily. In terms of assembly, binds both upstream activators and downstream substrates in multimolecular complexes. Part of a complex with MAP2K3, RAC1 and CCM2. Interacts with MAP2K5 and SPAG9. Requires Mg(2+) as cofactor. Post-translationally, phosphorylation at Ser-166 and Ser-337 by SGK1 inhibits its activity.

It catalyses the reaction L-seryl-[protein] + ATP = O-phospho-L-seryl-[protein] + ADP + H(+). It carries out the reaction L-threonyl-[protein] + ATP = O-phospho-L-threonyl-[protein] + ADP + H(+). Its activity is regulated as follows. Activated by phosphorylation on Thr-530. In terms of biological role, component of a protein kinase signal transduction cascade. Mediates activation of the NF-kappa-B, AP1 and DDIT3 transcriptional regulators. The sequence is that of Mitogen-activated protein kinase kinase kinase 3 (MAP3K3) from Homo sapiens (Human).